A 306-amino-acid chain; its full sequence is UDP-3-O-acyl-N-acetylglucosamine deacetylase (306 aa).

The Zn(2+) site is built by His-79, His-238, and Asp-242. The active-site Proton donor is His-265.

The protein belongs to the LpxC family. The cofactor is Zn(2+).

It carries out the reaction a UDP-3-O-[(3R)-3-hydroxyacyl]-N-acetyl-alpha-D-glucosamine + H2O = a UDP-3-O-[(3R)-3-hydroxyacyl]-alpha-D-glucosamine + acetate. It functions in the pathway glycolipid biosynthesis; lipid IV(A) biosynthesis; lipid IV(A) from (3R)-3-hydroxytetradecanoyl-[acyl-carrier-protein] and UDP-N-acetyl-alpha-D-glucosamine: step 2/6. Functionally, catalyzes the hydrolysis of UDP-3-O-myristoyl-N-acetylglucosamine to form UDP-3-O-myristoylglucosamine and acetate, the committed step in lipid A biosynthesis. This Shewanella sp. (strain W3-18-1) protein is UDP-3-O-acyl-N-acetylglucosamine deacetylase.